A 222-amino-acid polypeptide reads, in one-letter code: Phosphate-specific transport system accessory protein PhoU homolog 1 (222 aa).

It belongs to the PhoU family. As to quaternary structure, homodimer.

The protein resides in the cytoplasm. Functionally, plays a role in the regulation of phosphate uptake. This chain is Phosphate-specific transport system accessory protein PhoU homolog 1 (phoU1), found in Mycobacterium leprae (strain TN).